The sequence spans 85 residues: Large ribosomal subunit protein bL27 (85 aa).

The protein belongs to the bacterial ribosomal protein bL27 family.

The polypeptide is Large ribosomal subunit protein bL27 (Campylobacter curvus (strain 525.92)).